A 314-amino-acid polypeptide reads, in one-letter code: Transmembrane protein 178B (314 aa).

A signal peptide spans 1–24; the sequence is MRLLAGAGLCLALAALALLAVALS. Residues 32-83 form a disordered region; the sequence is DARRHRDRCRKPGGKRNDPGYMYTPGQHLPLRGEPPSSRIRSPRGGEPGGVR. Basic residues predominate over residues 36-45; sequence HRDRCRKPGG. Helical transmembrane passes span 194–214, 228–248, and 274–294; these read AGFI…GVLG, LLFL…VAGI, and MFCA…CTLA.

It belongs to the TMEM178 family.

Its subcellular location is the membrane. In Xenopus tropicalis (Western clawed frog), this protein is Transmembrane protein 178B (tmem178b).